The chain runs to 195 residues: ATP-dependent Clp protease proteolytic subunit (195 aa).

Serine 99 (nucleophile) is an active-site residue. The active site involves histidine 124.

The protein belongs to the peptidase S14 family. As to quaternary structure, fourteen ClpP subunits assemble into 2 heptameric rings which stack back to back to give a disk-like structure with a central cavity, resembling the structure of eukaryotic proteasomes.

The protein resides in the cytoplasm. It catalyses the reaction Hydrolysis of proteins to small peptides in the presence of ATP and magnesium. alpha-casein is the usual test substrate. In the absence of ATP, only oligopeptides shorter than five residues are hydrolyzed (such as succinyl-Leu-Tyr-|-NHMec, and Leu-Tyr-Leu-|-Tyr-Trp, in which cleavage of the -Tyr-|-Leu- and -Tyr-|-Trp bonds also occurs).. Its function is as follows. Cleaves peptides in various proteins in a process that requires ATP hydrolysis. Has a chymotrypsin-like activity. Plays a major role in the degradation of misfolded proteins. The polypeptide is ATP-dependent Clp protease proteolytic subunit (Coxiella burnetii (strain CbuG_Q212) (Coxiella burnetii (strain Q212))).